The sequence spans 408 residues: tRNA pseudouridine synthase D (408 aa).

The active-site Nucleophile is the Asp76. A TRUD domain is found at 149–362 (GFINYYDSQR…NSFERKVRIL (214 aa)).

This sequence belongs to the pseudouridine synthase TruD family.

It catalyses the reaction uridine(13) in tRNA = pseudouridine(13) in tRNA. Functionally, responsible for synthesis of pseudouridine from uracil-13 in transfer RNAs. The chain is tRNA pseudouridine synthase D from Leptospira interrogans serogroup Icterohaemorrhagiae serovar Lai (strain 56601).